Consider the following 210-residue polypeptide: dITP/XTP pyrophosphatase (210 aa).

Residue 13 to 18 coordinates substrate; that stretch reads THNPGK. Mg(2+)-binding residues include Asp-45 and Asp-74. Asp-74 serves as the catalytic Proton acceptor. Substrate-binding positions include Ser-75, 160-163, Lys-183, and 195-196; these read FGYD and HR.

Belongs to the HAM1 NTPase family. In terms of assembly, homodimer. It depends on Mg(2+) as a cofactor.

The catalysed reaction is XTP + H2O = XMP + diphosphate + H(+). The enzyme catalyses dITP + H2O = dIMP + diphosphate + H(+). It carries out the reaction ITP + H2O = IMP + diphosphate + H(+). Pyrophosphatase that catalyzes the hydrolysis of nucleoside triphosphates to their monophosphate derivatives, with a high preference for the non-canonical purine nucleotides XTP (xanthosine triphosphate), dITP (deoxyinosine triphosphate) and ITP. Seems to function as a house-cleaning enzyme that removes non-canonical purine nucleotides from the nucleotide pool, thus preventing their incorporation into DNA/RNA and avoiding chromosomal lesions. The sequence is that of dITP/XTP pyrophosphatase from Rhodopseudomonas palustris (strain ATCC BAA-98 / CGA009).